The sequence spans 324 residues: Probable RuBisCO transcriptional regulator (324 aa).

Positions 8–65 (FSLEQLRILKAIATEGSFKKAAESLYMTQPAISLQIQTLEKKLNIALFDRSGRRALMT) constitute an HTH lysR-type domain. The segment at residues 25–44 (FKKAAESLYMTQPAISLQIQ) is a DNA-binding region (H-T-H motif).

The protein belongs to the LysR transcriptional regulatory family.

The protein localises to the plastid. It localises to the cyanelle. Functionally, trans-acting transcriptional regulator of RuBisCO genes (rbcL and rbcS) expression. The protein is Probable RuBisCO transcriptional regulator (rbcR) of Cyanophora paradoxa.